The primary structure comprises 355 residues: MAHNPEERNNDKQKALDNAISQIEKAFGKGAIMKLKQNPVEKIDTISTGSIALDSALGVGGLPKGRIIEIFGPESSGKTTLALHVIAEAQKKGGLCAFIDAEHALDVIYARKLGVKTDDLVISQPDTGEQALHIVEYLVCSSAVDVIVIDSVAALTPRAEIEGDMGDQHMGLQARLLSHGLRKLTSVVSKANCILIFINQIRMKIGVVYGNPETTTGGNALKFYTSIRLDIRKVGAIKDKENITGNETRVKVVKNKVAPPFREAKFDIMYNEGISKLGEIIDIGAKLGVLEKAGAYYSYNNTRLGQGRENVKSYLKANKEIASEIETKIRDLFKNHDNSIAIEEEREQLLEESVF.

72 to 79 (GPESSGKT) contacts ATP.

Belongs to the RecA family.

It localises to the cytoplasm. Functionally, can catalyze the hydrolysis of ATP in the presence of single-stranded DNA, the ATP-dependent uptake of single-stranded DNA by duplex DNA, and the ATP-dependent hybridization of homologous single-stranded DNAs. It interacts with LexA causing its activation and leading to its autocatalytic cleavage. The chain is Protein RecA from Wolbachia pipientis subsp. Culex pipiens (strain wPip).